Here is a 516-residue protein sequence, read N- to C-terminus: Maturase K (516 aa).

The protein belongs to the intron maturase 2 family. MatK subfamily.

The protein localises to the plastid. It is found in the chloroplast. In terms of biological role, usually encoded in the trnK tRNA gene intron. Probably assists in splicing its own and other chloroplast group II introns. The sequence is that of Maturase K from Chara globularis (Fragile stonewort).